The sequence spans 292 residues: Elongation factor Ts (292 aa).

The involved in Mg(2+) ion dislocation from EF-Tu stretch occupies residues 80 to 83 (TDFV).

This sequence belongs to the EF-Ts family.

Its subcellular location is the cytoplasm. In terms of biological role, associates with the EF-Tu.GDP complex and induces the exchange of GDP to GTP. It remains bound to the aminoacyl-tRNA.EF-Tu.GTP complex up to the GTP hydrolysis stage on the ribosome. The polypeptide is Elongation factor Ts (Psychrobacter sp. (strain PRwf-1)).